The following is a 407-amino-acid chain: 1-deoxy-D-xylulose 5-phosphate reductoisomerase (407 aa).

Positions 25, 26, 27, 28, 53, and 136 each coordinate NADPH. Lys-137 provides a ligand contact to 1-deoxy-D-xylulose 5-phosphate. Residue Glu-138 coordinates NADPH. Asp-162 serves as a coordination point for Mn(2+). Positions 163, 164, 188, and 211 each coordinate 1-deoxy-D-xylulose 5-phosphate. Glu-164 provides a ligand contact to Mn(2+). Gly-217 contacts NADPH. Positions 224, 229, 230, and 233 each coordinate 1-deoxy-D-xylulose 5-phosphate. Glu-233 contacts Mn(2+).

This sequence belongs to the DXR family. The cofactor is Mg(2+). It depends on Mn(2+) as a cofactor.

It catalyses the reaction 2-C-methyl-D-erythritol 4-phosphate + NADP(+) = 1-deoxy-D-xylulose 5-phosphate + NADPH + H(+). The protein operates within isoprenoid biosynthesis; isopentenyl diphosphate biosynthesis via DXP pathway; isopentenyl diphosphate from 1-deoxy-D-xylulose 5-phosphate: step 1/6. Functionally, catalyzes the NADPH-dependent rearrangement and reduction of 1-deoxy-D-xylulose-5-phosphate (DXP) to 2-C-methyl-D-erythritol 4-phosphate (MEP). This is 1-deoxy-D-xylulose 5-phosphate reductoisomerase from Rhodopseudomonas palustris (strain BisB5).